Consider the following 31-residue polypeptide: Nemertide alpha-4 (31 aa).

3 cysteine pairs are disulfide-bonded: Cys-2-Cys-16, Cys-9-Cys-20, and Cys-15-Cys-26. Residues Pro-28 and Pro-29 each carry the 4-hydroxyproline modification.

This sequence belongs to the nemertide family. As to expression, confined to the epidermis and to the mucus layer.

The protein localises to the secreted. Potent toxin, demonstrating strong inhibitory effects on insect sodium channels (Nav) and reduced activity on mammalian sodium channels. Potently inhibits inactivation of insect sodium channels of B.germanica (BgNav1) (EC(50)=11.1 nM). Also delays the inactivation of most mammalian Nav (human Nav1.1/SCN1A; EC(50)=92 nM, rat Nav1.2/SCN2A; EC(50)=134.2 nM, rat Nav1.3/SCN3A; EC(50)=12.9 nM, rat Nav1.4/SCN4A; EC(50)=14.6 nM, human Nav1.5/SCN5A; EC(50)=27.8 nM, mouse Nav1.6/SCN8A; EC(50)=123.6 nM, human Nav1.9/SCN9A; EC(50)=80.5 nM). Inactivation is completely prevented by a concentration of 1 uM, resulting in sustained, non-inactivating currents. In addition, the toxin significantly enhances the recovery from inactivation, and the open state is not required for the toxin to interact with the channel. In vivo, injection into brine shrimp (Artemia salina) stops movement or causes death after 24 hours (EC(50)=0.4 uM). The sequence is that of Nemertide alpha-4 from Lineus sanguineus (Ribbon worm).